Here is a 337-residue protein sequence, read N- to C-terminus: Glyceraldehyde-3-phosphate dehydrogenase 1, cytosolic (337 aa).

NAD(+) contacts are provided by residues 13-14, D35, and R82; that span reads RI. D-glyceraldehyde 3-phosphate is bound by residues 153–155, T184, 213–214, and R236; these read SCT and TG. The active-site Nucleophile is the C154. N318 lines the NAD(+) pocket.

This sequence belongs to the glyceraldehyde-3-phosphate dehydrogenase family. As to quaternary structure, homotetramer. Post-translationally, phosphorylated after gibberellin treatment.

It is found in the cytoplasm. The enzyme catalyses D-glyceraldehyde 3-phosphate + phosphate + NAD(+) = (2R)-3-phospho-glyceroyl phosphate + NADH + H(+). Its pathway is carbohydrate degradation; glycolysis; pyruvate from D-glyceraldehyde 3-phosphate: step 1/5. Its function is as follows. Key enzyme in glycolysis that catalyzes the first step of the pathway by converting D-glyceraldehyde 3-phosphate (G3P) into 3-phospho-D-glyceroyl phosphate. Essential for the maintenance of cellular ATP levels and carbohydrate metabolism. The sequence is that of Glyceraldehyde-3-phosphate dehydrogenase 1, cytosolic (GAPC1) from Oryza sativa subsp. japonica (Rice).